Reading from the N-terminus, the 348-residue chain is Protein pelota homolog (348 aa).

The protein belongs to the eukaryotic release factor 1 family. Pelota subfamily. In terms of assembly, monomer. Requires a divalent metal cation as cofactor.

Its subcellular location is the cytoplasm. Its function is as follows. May function in recognizing stalled ribosomes, interact with stem-loop structures in stalled mRNA molecules, and effect endonucleolytic cleavage of the mRNA. May play a role in the release non-functional ribosomes and degradation of damaged mRNAs. Has endoribonuclease activity. This is Protein pelota homolog from Methanococcus maripaludis (strain C7 / ATCC BAA-1331).